The primary structure comprises 59 residues: UPF0434 protein HEAR2489 (59 aa).

Belongs to the UPF0434 family.

In Herminiimonas arsenicoxydans, this protein is UPF0434 protein HEAR2489.